A 351-amino-acid chain; its full sequence is Molybdenum import ATP-binding protein ModC (351 aa).

The ABC transporter domain occupies 1 to 229; it reads MLKINVKKQL…PLFLPWKLED (229 aa). 31-38 lines the ATP pocket; it reads GLSGSGKT. In terms of domain architecture, Mop spans 289 to 351; that stretch reads KTSIRNILHG…FAQIKAVSVL (63 aa).

This sequence belongs to the ABC transporter superfamily. Molybdate importer (TC 3.A.1.8) family. In terms of assembly, the complex is composed of two ATP-binding proteins (ModC), two transmembrane proteins (ModB) and a solute-binding protein (ModA).

It localises to the cell inner membrane. The catalysed reaction is molybdate(out) + ATP + H2O = molybdate(in) + ADP + phosphate + H(+). Part of the ABC transporter complex ModABC involved in molybdenum import. Responsible for energy coupling to the transport system. The sequence is that of Molybdenum import ATP-binding protein ModC from Pasteurella multocida (strain Pm70).